The sequence spans 264 residues: Transcription initiation factor TFIID subunit 9 (264 aa).

Lys5 bears the N6-acetyllysine mark. Phosphoserine is present on residues Ser149, Ser152, Ser155, and Ser158. A disordered region spans residues 150–174 (VGSVSSRPSTPTLGTPTPQAMSVST). Over residues 151 to 174 (GSVSSRPSTPTLGTPTPQAMSVST) the composition is skewed to polar residues. Phosphothreonine occurs at positions 159, 161, 164, and 178. 2 positions are modified to phosphoserine: Ser181 and Ser196. Positions 233–264 (QNTANESANALKRKREEEDDDDDDDDDDYDNL) are disordered. A compositionally biased stretch (acidic residues) spans 249–264 (EEDDDDDDDDDDYDNL).

It belongs to the TAF9 family. In terms of assembly, component of the TFIID basal transcription factor complex, composed of TATA-box-binding protein TBP, and a number of TBP-associated factors (TAFs), including TAF1, TAF2, TAF3, TAF4, TAF5, TAF6, TAF7, TAF8, TAF9, TAF10, TAF11, TAF12 and TAF13. Component of the TATA-binding protein-free TAF complex (TFTC), the PCAF histone acetylase complex and the STAGA transcription coactivator-HAT complex. The PCAF complex consists at least of TADA2L/ADA2, SUPT3H/SPT3, TADA3L/ADA3, TAF5L/PAF65-beta, TAF6L/PAF65-alpha, TAF10/TAFII30, TAF12/TAFII20, TAF9/TAFII31 and TRRAP. The STAGA transcription coactivator-HAT complex consists at least of SUPT3H, GCN5L2, SUPT7L, TAF5L, TAF6L, TADA3L, TAD1L, TAF10, TAF12, TRRAP and TAF9. Binds N-terminal domain of p53/TP53 which is essential for transcription. Component of some MLL1/MLL complex, at least composed of the core components KMT2A/MLL1, ASH2L, HCFC1/HCF1, WDR5 and RBBP5, as well as the facultative components BACC1, CHD8, E2F6, HSP70, INO80C, KANSL1, LAS1L, MAX, MCRS1, MGA, MYST1/MOF, PELP1, PHF20, PRP31, RING2, RUVB1/TIP49A, RUVB2/TIP49B, SENP3, TAF1, TAF4, TAF6, TAF7, TAF9 and TEX10. Binds TFIIB and the Herpes simplex virus activator VP16. Forms a heterodimer with TAF6 in a complex with the TAF4B-TAF12 heterodimer. Also interacts with TAF5. Binds directly DNA. Increased DNA binding when complexed with TAF6.

It is found in the nucleus. Functionally, the TFIID basal transcription factor complex plays a major role in the initiation of RNA polymerase II (Pol II)-dependent transcription. TFIID recognizes and binds promoters with or without a TATA box via its subunit TBP, a TATA-box-binding protein, and promotes assembly of the pre-initiation complex (PIC). The TFIID complex consists of TBP and TBP-associated factors (TAFs), including TAF1, TAF2, TAF3, TAF4, TAF5, TAF6, TAF7, TAF8, TAF9, TAF10, TAF11, TAF12 and TAF13. TAF9 is also a component of the TBP-free TAFII complex (TFTC), the PCAF histone acetylase complex and the STAGA transcription coactivator-HAT complex. TAF9 and its paralog TAF9B are involved in transcriptional activation as well as repression of distinct but overlapping sets of genes. Essential for cell viability. May have a role in gene regulation associated with apoptosis. The protein is Transcription initiation factor TFIID subunit 9 of Rattus norvegicus (Rat).